Reading from the N-terminus, the 74-residue chain is Translation initiation factor IF-1 (74 aa).

The S1-like domain maps to 1-72 (MSKQDLIEME…TKGRITYRLR (72 aa)).

It belongs to the IF-1 family. Component of the 30S ribosomal translation pre-initiation complex which assembles on the 30S ribosome in the order IF-2 and IF-3, IF-1 and N-formylmethionyl-tRNA(fMet); mRNA recruitment can occur at any time during PIC assembly.

The protein localises to the cytoplasm. One of the essential components for the initiation of protein synthesis. Stabilizes the binding of IF-2 and IF-3 on the 30S subunit to which N-formylmethionyl-tRNA(fMet) subsequently binds. Helps modulate mRNA selection, yielding the 30S pre-initiation complex (PIC). Upon addition of the 50S ribosomal subunit IF-1, IF-2 and IF-3 are released leaving the mature 70S translation initiation complex. In Trichodesmium erythraeum (strain IMS101), this protein is Translation initiation factor IF-1.